Reading from the N-terminus, the 308-residue chain is N-acetylmuramic acid 6-phosphate etherase (308 aa).

An SIS domain is found at 59-222 (TAERLRHGGR…STGVMVKLGK (164 aa)). Glutamate 87 functions as the Proton donor in the catalytic mechanism. Residue glutamate 118 is part of the active site.

It belongs to the GCKR-like family. MurNAc-6-P etherase subfamily. In terms of assembly, homodimer.

The catalysed reaction is N-acetyl-D-muramate 6-phosphate + H2O = N-acetyl-D-glucosamine 6-phosphate + (R)-lactate. It functions in the pathway amino-sugar metabolism; N-acetylmuramate degradation. Specifically catalyzes the cleavage of the D-lactyl ether substituent of MurNAc 6-phosphate, producing GlcNAc 6-phosphate and D-lactate. This is N-acetylmuramic acid 6-phosphate etherase from Nostoc punctiforme (strain ATCC 29133 / PCC 73102).